We begin with the raw amino-acid sequence, 378 residues long: Acetylornithine deacetylase (378 aa).

Residue His76 coordinates Zn(2+). The active site involves Asp78. Asp108 provides a ligand contact to Zn(2+). Glu140 is a catalytic residue. Residues Glu141, Glu165, and His351 each contribute to the Zn(2+) site.

This sequence belongs to the peptidase M20A family. ArgE subfamily. In terms of assembly, homodimer. Requires Zn(2+) as cofactor. Co(2+) serves as cofactor. It depends on glutathione as a cofactor.

The protein localises to the cytoplasm. It catalyses the reaction N(2)-acetyl-L-ornithine + H2O = L-ornithine + acetate. It participates in amino-acid biosynthesis; L-arginine biosynthesis; L-ornithine from N(2)-acetyl-L-ornithine (linear): step 1/1. Functionally, catalyzes the hydrolysis of the amide bond of N(2)-acetylated L-amino acids. Cleaves the acetyl group from N-acetyl-L-ornithine to form L-ornithine, an intermediate in L-arginine biosynthesis pathway, and a branchpoint in the synthesis of polyamines. The chain is Acetylornithine deacetylase from Vibrio vulnificus (strain CMCP6).